Here is a 76-residue protein sequence, read N- to C-terminus: Gas vesicle protein A1 (76 aa).

Binds to GvpF1 regions lie at residues 1-22 (MAQP…KGVV) and 2-43 (AQPD…EARV). The tract at residues 9–19 (LAEVLDRVLDK) is alpha helix 1. The tract at residues 23–31 (VDVWARVSL) is beta-strand 1. The interval 32–34 (VGI) is beta turn. Residues 35–43 (EILTVEARV) are beta-strand 2. Residues 48-67 (VDTFLHYAEEIAKIEQAELT) form an alpha helix 2 region.

Belongs to the gas vesicle GvpA family. Major component of the gas vesicle shell which is 2 nm thick and consists of a single layer of the protein. It forms 4.6 nm-wide ribs nearly perpendicular to the long axis of the vesicle. Modeled as antiparallel homodimers. The ribs form a low-pitch helix rather than a stack of hoops. Interacts with GvpF1 via its N-terminus (residues 1-43) in early growth stages, none of the other GvpG1 to GvpM1 proteins were seen to directly bind GvpA1 in H.volcanii experiments. Might interact with GvpJ1. Might interact with GvpG1, GvpH1, GvpJ1, GvpM1, GvpN1 and GvpO1.

The protein localises to the gas vesicle shell. Its function is as follows. Gas vesicles are hollow, gas filled proteinaceous nanostructures found in several microbial planktonic microorganisms. They allow positioning of halobacteria at the optimal depth for growth in the poorly aerated shallow brine pools of their habitat. GvpA forms the protein shell. The critical collapse pressure (CCP) of p-vac gas vesicles is 0.66 MPa; mutating residues in p-gvpA to those found in c-gvpA increases the CCP. These residues partially and independently control the width and strength of gas vesicles. In stationary phase gas vesicles, about 30 times more GvpA1 is found than GvpA2. Functionally, expression of a 9.5 kb p-vac DNA fragment containing 2 divergently transcribed regions (gvpD-gvpE-gvpF-gvpG-gvpH-gvpI-gvpJ-gvpK-gvpL-gvpM and gvpA-gvpC-gvpN-gvpO) allows H.volcanii to produce gas vesicles. All site-directed mutagenesis is tested in H.volcanii. A minimal gas vesicle can be made in H.volcanii by gvpA1-gvpO1 plus gvpF1-gvpG1-gvpJ1-gvpK1-gvpL1-gvpM1; lack of enough GvpJ1 prevents their formation. A similar region restores gas vesicle production in H.halobium without the p-vac locus, but it still has the c-vac locus. The polypeptide is Gas vesicle protein A1 (Halobacterium salinarum (strain ATCC 700922 / JCM 11081 / NRC-1) (Halobacterium halobium)).